A 514-amino-acid chain; its full sequence is Histidine ammonia-lyase (514 aa).

Positions Ala-147 to Gly-149 form a cross-link, 5-imidazolinone (Ala-Gly). Ser-148 is modified (2,3-didehydroalanine (Ser)).

It belongs to the PAL/histidase family. Post-translationally, contains an active site 4-methylidene-imidazol-5-one (MIO), which is formed autocatalytically by cyclization and dehydration of residues Ala-Ser-Gly.

It is found in the cytoplasm. The catalysed reaction is L-histidine = trans-urocanate + NH4(+). It functions in the pathway amino-acid degradation; L-histidine degradation into L-glutamate; N-formimidoyl-L-glutamate from L-histidine: step 1/3. In Gloeobacter violaceus (strain ATCC 29082 / PCC 7421), this protein is Histidine ammonia-lyase.